The primary structure comprises 294 residues: 33 kDa chaperonin (294 aa).

Cystine bridges form between C230/C232 and C263/C266.

This sequence belongs to the HSP33 family. In terms of processing, under oxidizing conditions two disulfide bonds are formed involving the reactive cysteines. Under reducing conditions zinc is bound to the reactive cysteines and the protein is inactive.

Its subcellular location is the cytoplasm. Redox regulated molecular chaperone. Protects both thermally unfolding and oxidatively damaged proteins from irreversible aggregation. Plays an important role in the bacterial defense system toward oxidative stress. This chain is 33 kDa chaperonin, found in Chromobacterium violaceum (strain ATCC 12472 / DSM 30191 / JCM 1249 / CCUG 213 / NBRC 12614 / NCIMB 9131 / NCTC 9757 / MK).